A 74-amino-acid chain; its full sequence is Mitotic-spindle organizing protein 1 (74 aa).

The protein belongs to the MOZART1 family. As to quaternary structure, part of the gamma-tubulin complex.

It localises to the cytoplasm. Its subcellular location is the cytoskeleton. It is found in the microtubule organizing center. The protein resides in the spindle pole body. Required for gamma-tubulin complex recruitment to the microtubule organizing center (MTOC). The protein is Mitotic-spindle organizing protein 1 of Emericella nidulans (strain FGSC A4 / ATCC 38163 / CBS 112.46 / NRRL 194 / M139) (Aspergillus nidulans).